Consider the following 370-residue polypeptide: Histidinol-phosphate aminotransferase 2 (370 aa).

N6-(pyridoxal phosphate)lysine is present on lysine 230.

The protein belongs to the class-II pyridoxal-phosphate-dependent aminotransferase family. Histidinol-phosphate aminotransferase subfamily. In terms of assembly, homodimer. Requires pyridoxal 5'-phosphate as cofactor.

The enzyme catalyses L-histidinol phosphate + 2-oxoglutarate = 3-(imidazol-4-yl)-2-oxopropyl phosphate + L-glutamate. It participates in amino-acid biosynthesis; L-histidine biosynthesis; L-histidine from 5-phospho-alpha-D-ribose 1-diphosphate: step 7/9. The sequence is that of Histidinol-phosphate aminotransferase 2 from Pseudomonas fluorescens (strain Pf0-1).